We begin with the raw amino-acid sequence, 227 residues long: N-acetyltransferase family 8 member 7 (227 aa).

The next 2 membrane-spanning stretches (helical) occupy residues 36-56 (MLLL…LFLA) and 58-78 (GSWL…WFLA). Positions 61–220 (LLVLLSILTL…PMINLKYSLT (160 aa)) constitute an N-acetyltransferase domain.

This sequence belongs to the camello family.

It localises to the membrane. The catalysed reaction is L-lysyl-[protein] + acetyl-CoA = N(6)-acetyl-L-lysyl-[protein] + CoA + H(+). Has histone acetyltransferase activity in vitro, with specificity for histone H4. In Mus musculus (Mouse), this protein is N-acetyltransferase family 8 member 7.